The chain runs to 357 residues: 3-dehydroquinate synthase (357 aa).

NAD(+) is bound by residues 99–103 (GATGD), 123–124 (TT), Lys135, Lys144, and 162–165 (FLET). Zn(2+) is bound by residues Glu177, His247, and His261.

It belongs to the sugar phosphate cyclases superfamily. Dehydroquinate synthase family. Requires Co(2+) as cofactor. It depends on Zn(2+) as a cofactor. The cofactor is NAD(+).

The protein resides in the cytoplasm. The enzyme catalyses 7-phospho-2-dehydro-3-deoxy-D-arabino-heptonate = 3-dehydroquinate + phosphate. The protein operates within metabolic intermediate biosynthesis; chorismate biosynthesis; chorismate from D-erythrose 4-phosphate and phosphoenolpyruvate: step 2/7. Catalyzes the conversion of 3-deoxy-D-arabino-heptulosonate 7-phosphate (DAHP) to dehydroquinate (DHQ). The sequence is that of 3-dehydroquinate synthase from Macrococcus caseolyticus (strain JCSC5402) (Macrococcoides caseolyticum).